Here is a 236-residue protein sequence, read N- to C-terminus: Venom metalloproteinase antarease-like TfasMP_A (236 aa).

Positions 4–232 constitute a Peptidase M12B domain; it reads IVVEYYIVTD…KPAASCIFEQ (229 aa). A Zn(2+)-binding site is contributed by His161. Glu162 is an active-site residue. The Zn(2+) site is built by His165 and His171.

This sequence belongs to the venom metalloproteinase (M12B) family. Zn(2+) is required as a cofactor. Post-translationally, contains several disulfide bonds. In terms of tissue distribution, expressed by the venom gland.

Its subcellular location is the secreted. With respect to regulation, inhibited by EDTA. In terms of biological role, acts as a metalloprotease. Penetrates intact tissue and specifically cleaves the vesicle-associated membrane protein 2 (VAMP2) (part of the SNARE complex) involved in pancreatic secretion, thus disrupting the normal vesicular traffic. The protein is Venom metalloproteinase antarease-like TfasMP_A of Tityus fasciolatus (Central Brazilian scorpion).